The following is a 199-amino-acid chain: CASP-like protein 4B1 (199 aa).

Positions 1-32 (MAMVASPDDIVKSPLPPPPPPPPPPLPPAHKD) are disordered. Residues 1–53 (MAMVASPDDIVKSPLPPPPPPPPPPLPPAHKDKAAYNPYSGCPAHGGDDGLDG) lie on the Cytoplasmic side of the membrane. The span at 14–28 (PLPPPPPPPPPPLPP) shows a compositional bias: pro residues. A helical transmembrane segment spans residues 54-74 (IVLVLRAAAALLALVAMALVA). Residues 75 to 91 (SCRHGDWMEFTRYQEYR) are Extracellular-facing. The chain crosses the membrane as a helical span at residues 92-112 (YLLGVAVVASLYSALQAARTF). The Cytoplasmic portion of the chain corresponds to 113-127 (RRMRAGTAYAATFLD). The chain crosses the membrane as a helical span at residues 128–148 (FAGDQAVGYLLITASSAALPI). Topologically, residues 149 to 163 (TIRMRSAVVNTFTDV) are extracellular. The chain crosses the membrane as a helical span at residues 164–184 (VAASISFAFLAFAALAFSALI). Residues 185–199 (AGFRLSSSSSSAYNY) are Cytoplasmic-facing.

It belongs to the Casparian strip membrane proteins (CASP) family. As to quaternary structure, homodimer and heterodimers.

Its subcellular location is the cell membrane. This chain is CASP-like protein 4B1, found in Oryza sativa subsp. japonica (Rice).